The chain runs to 544 residues: Aspartokinase (544 aa).

The ACT domain occupies 463-535; the sequence is LVGKQMVNFI…SAIGDSSAVD (73 aa).

This sequence belongs to the aspartokinase family.

It catalyses the reaction L-aspartate + ATP = 4-phospho-L-aspartate + ADP. Its pathway is amino-acid biosynthesis; L-methionine biosynthesis via de novo pathway; L-homoserine from L-aspartate: step 1/3. It participates in amino-acid biosynthesis; L-threonine biosynthesis; L-threonine from L-aspartate: step 1/5. In terms of biological role, phosphorylates aspartate, the first step in the biosynthesis of amino acids that derive from aspartate (the aspartate family of amino acids), including methioinine and threonine, the latter of which is a precursor to isoleucine. The protein is Aspartokinase of Candida albicans (strain SC5314 / ATCC MYA-2876) (Yeast).